The primary structure comprises 237 residues: Phosphoribosylaminoimidazole-succinocarboxamide synthase (237 aa).

Belongs to the SAICAR synthetase family.

The catalysed reaction is 5-amino-1-(5-phospho-D-ribosyl)imidazole-4-carboxylate + L-aspartate + ATP = (2S)-2-[5-amino-1-(5-phospho-beta-D-ribosyl)imidazole-4-carboxamido]succinate + ADP + phosphate + 2 H(+). It participates in purine metabolism; IMP biosynthesis via de novo pathway; 5-amino-1-(5-phospho-D-ribosyl)imidazole-4-carboxamide from 5-amino-1-(5-phospho-D-ribosyl)imidazole-4-carboxylate: step 1/2. The protein is Phosphoribosylaminoimidazole-succinocarboxamide synthase of Idiomarina loihiensis (strain ATCC BAA-735 / DSM 15497 / L2-TR).